The chain runs to 847 residues: Alanine--tRNA ligase (847 aa).

The Zn(2+) site is built by His554, His558, Cys656, and His660.

This sequence belongs to the class-II aminoacyl-tRNA synthetase family. Requires Zn(2+) as cofactor.

The protein resides in the cytoplasm. The enzyme catalyses tRNA(Ala) + L-alanine + ATP = L-alanyl-tRNA(Ala) + AMP + diphosphate. Functionally, catalyzes the attachment of alanine to tRNA(Ala) in a two-step reaction: alanine is first activated by ATP to form Ala-AMP and then transferred to the acceptor end of tRNA(Ala). Also edits incorrectly charged Ser-tRNA(Ala) and Gly-tRNA(Ala) via its editing domain. This Helicobacter pylori (strain Shi470) protein is Alanine--tRNA ligase.